Consider the following 475-residue polypeptide: Lipid II flippase MurJ (475 aa).

Residues 1–2 lie on the Cytoplasmic side of the membrane; it reads MS. A helical transmembrane segment spans residues 3–23; that stretch reads ILFSSILFSIATFFSRILGLF. At 24 to 35 the chain is on the periplasmic side; sequence RDVLFAKYFGVS. The helical transmembrane segment at 36-56 threads the bilayer; sequence YELDAYFIAIMFPFFLRKVFG. Residues 57–78 lie on the Cytoplasmic side of the membrane; sequence EGAMSSAFVPLYSEKSGEEKDK. The chain crosses the membrane as a helical span at residues 79-99; it reads FLSSVINGFSLIILALVILSY. The Periplasmic segment spans residues 100–123; that stretch reads FFPELIINLFGAGSSHETKILAKK. Residues 124 to 144 traverse the membrane as a helical segment; the sequence is LLLITSPSIYFIFLWAISYSI. At 145–150 the chain is on the cytoplasmic side; it reads LNTNNK. A helical transmembrane segment spans residues 151–171; sequence FFWPALTPSISNITIIIGTFL. The Periplasmic segment spans residues 172–175; it reads STKY. The helical transmembrane segment at 176–196 threads the bilayer; that stretch reads GIISPTIGFLIGSILMFFSII. The Cytoplasmic portion of the chain corresponds to 197–213; that stretch reads KSIIKHKYYFTIKHFPH. A helical membrane pass occupies residues 214-238; the sequence is FLKLFFPTFMTMVVSQINTVVDMNV. The Periplasmic portion of the chain corresponds to 239–249; that stretch reads VSFYDKGSISY. The chain crosses the membrane as a helical span at residues 250-271; it reads LQYASRFYLLPYGLFAVSVSTV. At 272-287 the chain is on the cytoplasmic side; the sequence is VLSKISNDRKNFNYHL. A helical transmembrane segment spans residues 288–308; that stretch reads NDALKTTLFFTIPSMVGLIFL. Residues 309–332 lie on the Periplasmic side of the membrane; it reads STPIIRFFYEHGAFTSKDTLITSK. A helical transmembrane segment spans residues 333–353; sequence ILIAYTLGLPFYGIYSTISRS. At 354-362 the chain is on the cytoplasmic side; the sequence is YHAIKNTKT. A helical transmembrane segment spans residues 363–383; that stretch reads PFIAATIVSLSNIILDIIFGL. At 384-386 the chain is on the periplasmic side; sequence KYG. The helical transmembrane segment at 387–407 threads the bilayer; sequence PIGVALATSIAGIIGVLYLLF. Over 408-416 the chain is Cytoplasmic; sequence SVKTFPIKD. A helical transmembrane segment spans residues 417–437; sequence FLKISLNSLIMLFVIYLTDFT. At 438–440 the chain is on the periplasmic side; it reads DNE. The helical transmembrane segment at 441–461 threads the bilayer; the sequence is FWFLIQILIGILVYLIFSSIF. At 462–475 the chain is on the cytoplasmic side; it reads YRDLIRRFLYARKK.

This sequence belongs to the MurJ/MviN family.

It localises to the cell inner membrane. The protein operates within cell wall biogenesis; peptidoglycan biosynthesis. Functionally, involved in peptidoglycan biosynthesis. Transports lipid-linked peptidoglycan precursors from the inner to the outer leaflet of the cytoplasmic membrane. This is Lipid II flippase MurJ from Thermosipho africanus (strain TCF52B).